Reading from the N-terminus, the 465-residue chain is 6-phospho-beta-glucosidase (465 aa).

Catalysis depends on glutamate 173, which acts as the Proton donor. The active-site Nucleophile is glutamate 362.

This sequence belongs to the glycosyl hydrolase 1 family.

It catalyses the reaction 6-phospho-beta-D-glucosyl-(1-&gt;4)-D-glucose + H2O = D-glucose 6-phosphate + D-glucose. It participates in carbohydrate metabolism; beta-glucoside metabolism. The chain is 6-phospho-beta-glucosidase (arbB) from Dickeya chrysanthemi (Pectobacterium chrysanthemi).